Here is a 278-residue protein sequence, read N- to C-terminus: Diaminopimelate epimerase (278 aa).

The substrate site is built by asparagine 13, glutamine 46, and asparagine 67. Cysteine 76 serves as the catalytic Proton donor. Substrate is bound by residues 77 to 78 (GN), asparagine 160, asparagine 193, and 211 to 212 (ER). The Proton acceptor role is filled by cysteine 220. Substrate is bound at residue 221-222 (GT).

Belongs to the diaminopimelate epimerase family. As to quaternary structure, homodimer.

The protein localises to the cytoplasm. It carries out the reaction (2S,6S)-2,6-diaminopimelate = meso-2,6-diaminopimelate. The protein operates within amino-acid biosynthesis; L-lysine biosynthesis via DAP pathway; DL-2,6-diaminopimelate from LL-2,6-diaminopimelate: step 1/1. Functionally, catalyzes the stereoinversion of LL-2,6-diaminopimelate (L,L-DAP) to meso-diaminopimelate (meso-DAP), a precursor of L-lysine and an essential component of the bacterial peptidoglycan. The protein is Diaminopimelate epimerase of Thioalkalivibrio sulfidiphilus (strain HL-EbGR7).